The primary structure comprises 673 residues: Probable lysophospholipase 4 (673 aa).

The N-terminal stretch at 1-19 (MYVNYIGLFAFVQISLTLA) is a signal peptide. N-linked (GlcNAc...) asparagine glycans are attached at residues N72, N125, N191, N194, N272, N301, N374, N404, N409, N481, N516, N545, and N574. The PLA2c domain maps to 74–615 (TCSNDNLLRP…QEYCWDGTLA (542 aa)). Residues 631–653 (TTSRAPSGTTSGTASSTTSSSVA) are disordered.

Belongs to the lysophospholipase family.

Its subcellular location is the secreted. The enzyme catalyses a 1-acyl-sn-glycero-3-phosphocholine + H2O = sn-glycerol 3-phosphocholine + a fatty acid + H(+). Catalyzes the release of fatty acids from lysophospholipids. The protein is Probable lysophospholipase 4 (plb4) of Schizosaccharomyces pombe (strain 972 / ATCC 24843) (Fission yeast).